Consider the following 462-residue polypeptide: Phospho-2-dehydro-3-deoxyheptonate aldolase AroG (462 aa).

Mn(2+) is bound at residue Cys87. Phosphoenolpyruvate contacts are provided by residues Arg126, 283 to 284, Lys306, and Arg337; that span reads ER. Mn(2+) is bound by residues His369, Glu411, and Asp441.

Homodimer. Interacts with Rv0948c. Requires Mn(2+) as cofactor. The cofactor is Co(2+). It depends on Cd(2+) as a cofactor.

It catalyses the reaction D-erythrose 4-phosphate + phosphoenolpyruvate + H2O = 7-phospho-2-dehydro-3-deoxy-D-arabino-heptonate + phosphate. It functions in the pathway metabolic intermediate biosynthesis; chorismate biosynthesis; chorismate from D-erythrose 4-phosphate and phosphoenolpyruvate: step 1/7. Feedback inhibited by tryptophan, tyrosine, phenylalanine and chorismate. Functionally, catalyzes an aldol-like condensation reaction between phosphoenolpyruvate (PEP) and D-erythrose 4-phosphate (E4P) to generate 3-deoxy-D-arabino-heptulosonate 7-phosphate (DAH7P) and inorganic phosphate. In Mycobacterium tuberculosis (strain ATCC 25618 / H37Rv), this protein is Phospho-2-dehydro-3-deoxyheptonate aldolase AroG (aroG).